Here is a 249-residue protein sequence, read N- to C-terminus: uncharacterized protein (249 aa).

It is found in the cytoplasm. It localises to the nucleus. This is an uncharacterized protein from Schizosaccharomyces pombe (strain 972 / ATCC 24843) (Fission yeast).